The sequence spans 217 residues: Ribosomal RNA small subunit methyltransferase G (217 aa).

Residues glycine 74, leucine 79, 125–126, and arginine 143 each bind S-adenosyl-L-methionine; that span reads IQ.

This sequence belongs to the methyltransferase superfamily. RNA methyltransferase RsmG family.

It is found in the cytoplasm. It catalyses the reaction guanosine(527) in 16S rRNA + S-adenosyl-L-methionine = N(7)-methylguanosine(527) in 16S rRNA + S-adenosyl-L-homocysteine. Its function is as follows. Specifically methylates the N7 position of guanine in position 527 of 16S rRNA. The chain is Ribosomal RNA small subunit methyltransferase G from Syntrophotalea carbinolica (strain DSM 2380 / NBRC 103641 / GraBd1) (Pelobacter carbinolicus).